The chain runs to 1004 residues: 2-oxoglutarate dehydrogenase E1 component (1004 aa).

Belongs to the alpha-ketoglutarate dehydrogenase family. In terms of assembly, homodimer. Part of the 2-oxoglutarate dehydrogenase (OGDH) complex composed of E1 (2-oxoglutarate dehydrogenase), E2 (dihydrolipoamide succinyltransferase) and E3 (dihydrolipoamide dehydrogenase); the complex contains multiple copies of the three enzymatic components (E1, E2 and E3). Thiamine diphosphate serves as cofactor.

The enzyme catalyses N(6)-[(R)-lipoyl]-L-lysyl-[protein] + 2-oxoglutarate + H(+) = N(6)-[(R)-S(8)-succinyldihydrolipoyl]-L-lysyl-[protein] + CO2. Functionally, E1 component of the 2-oxoglutarate dehydrogenase (OGDH) complex which catalyzes the decarboxylation of 2-oxoglutarate, the first step in the conversion of 2-oxoglutarate to succinyl-CoA and CO(2). The protein is 2-oxoglutarate dehydrogenase E1 component of Brucella suis biovar 1 (strain 1330).